Consider the following 227-residue polypeptide: Max dimerization protein 1 (227 aa).

The Nuclear localization signal motif lies at 21–48 (RREREAEHGYASMLPYSKDRDAFKRRNK). Disordered stretches follow at residues 30–66 (YASM…MEKN), 142–161 (MDSV…REEL), and 184–227 (GWSS…GLGL). The 53-residue stretch at 55–107 (SSRSTHNEMEKNRRAHLRLCLEKLKGLVPLGPESSRHTTLSLLTKAKLHIKKL) folds into the bHLH domain. Positions 198-211 (MQSLGSDEGYSSAT) are enriched in polar residues. Over residues 216–227 (KLQDGHKAGLGL) the composition is skewed to basic and acidic residues.

As to quaternary structure, heterodimer with MAX; the interaction is required for DNA-binding. DNA binding requires dimerization with another bHLH protein; does not form homodimers, and does not bind to DNA in the absence of MAX in vitro. Interacts with RNF17. In terms of processing, ubiquitinated by BIRC2/c-IAP1, leading to its subsequent degradation by the proteasome.

The protein resides in the nucleus. Functionally, component of a transcriptional repressor complex together with MAX. In complex with MAX binds to the core DNA sequence 5'-CAC[GA]TG-3'. Antagonizes MYC transcriptional activity by competing with MYC for MAX binding. Binds to the TERT promoter and represses telomerase expression, possibly by interfering with MYC binding. This chain is Max dimerization protein 1 (Mxd1), found in Mus musculus (Mouse).